The following is a 274-amino-acid chain: Undecaprenyl-diphosphatase (274 aa).

Helical transmembrane passes span 44–64 (AKVF…LVYW), 85–105 (LNVL…GKAI), 109–129 (LFTP…ILWA), 185–205 (ATDY…VYSL), 215–235 (ADIP…WLCV), and 250–270 (FAWY…SGLV).

The protein belongs to the UppP family.

The protein localises to the cell inner membrane. The enzyme catalyses di-trans,octa-cis-undecaprenyl diphosphate + H2O = di-trans,octa-cis-undecaprenyl phosphate + phosphate + H(+). In terms of biological role, catalyzes the dephosphorylation of undecaprenyl diphosphate (UPP). Confers resistance to bacitracin. This Acidovorax ebreus (strain TPSY) (Diaphorobacter sp. (strain TPSY)) protein is Undecaprenyl-diphosphatase.